A 502-amino-acid polypeptide reads, in one-letter code: Tryptophan decarboxylase TDC1 (502 aa).

Polar residues predominate over residues 1–18 (MGSLDSNYDTESPASVGQ). The disordered stretch occupies residues 1–21 (MGSLDSNYDTESPASVGQFNP). Position 319 is an N6-(pyridoxal phosphate)lysine (lysine 319).

Belongs to the group II decarboxylase family. Pyridoxal 5'-phosphate serves as cofactor. As to expression, highly expressed in apex. Expressed in young stem and bark tissues. Expressed at low levels in leaves, fruits and seeds.

The enzyme catalyses L-tryptophan + H(+) = tryptamine + CO2. Functionally, involved in the biosynthesis of tryptamine. Supplies tryptamine for the indole moiety of camptothecin (CPT), an anti-cancer monoterpene alkaloid. Represents a key step in monoterpene indole alkaloid biosynthesis. Is specific for tryptophan, and inactive against tyrosine, phenylalanine and 3,4-dihydroxyphenylalanine (dopa). This chain is Tryptophan decarboxylase TDC1, found in Camptotheca acuminata (Happy tree).